Here is a 270-residue protein sequence, read N- to C-terminus: Ribonuclease HII (270 aa).

The RNase H type-2 domain maps to 84–270 (RYIAGVDEVG…HRNSFLTKLL (187 aa)). The a divalent metal cation site is built by Asp-90, Glu-91, and Asp-186.

Belongs to the RNase HII family. It depends on Mn(2+) as a cofactor. Mg(2+) serves as cofactor.

Its subcellular location is the cytoplasm. It catalyses the reaction Endonucleolytic cleavage to 5'-phosphomonoester.. Its function is as follows. Endonuclease that specifically degrades the RNA of RNA-DNA hybrids. This Clostridium beijerinckii (strain ATCC 51743 / NCIMB 8052) (Clostridium acetobutylicum) protein is Ribonuclease HII.